The primary structure comprises 487 residues: Iron-sulfur cluster assembly SufBD family protein ycf24 (487 aa).

The protein belongs to the iron-sulfur cluster assembly SufBD family.

The protein resides in the plastid. Its subcellular location is the chloroplast. The polypeptide is Iron-sulfur cluster assembly SufBD family protein ycf24 (ycf24) (Porphyra purpurea (Red seaweed)).